The primary structure comprises 742 residues: MYPQFRRGHLAAAVLFASSSLLGGQALAEDERLEELDERAESVVQLGDEVVLGTAEQELKQAPGVSIITAEDIRKRPPVNDLSEIIRTMPGVNLTGNSSSGQRGNNRQIDIRGMGPENTLILVDGKPVSSRNSVRYGWRGERDTRGDSNWVPPEEVERIEVLRGPAAARYGSGAAGGVVNIITKRPTDRLRGSMTVFTNIPESSKDGATRRANFSLSGPLTEALSFRAYGSANKTDSDDTDINLGHTVNPSRTVAGREGVRNRDLSGMLSWQVTPDQVVDFEAGFSRQGNIYAGDTQNNNGTANTQGLADDGAETNRMYRENYAITHNGTWSFGTSRFVAQYDSTRNNRLEEGLAGSVEGQIGADRSFSASKLENYRLSGELNLPLHALFEQVLTVGAEWNKETLNDPSSLKQGFVGSDSLPGTPAAGSRSPKSKAEIRALYVEDNIELRPGTMLTPGLRLDDHSDFGLNWSPSLNASQTLGEYFTVKAGIARAFKAPNLYQSNPNYLLYTRGNGCPIQTSSGGCYLVGNENLDAETSVNKELGIEFRRDGWVAGLTYFRNDYKNKIVAPLDVMGQTGTGNNILQWSNAKKAVVEGLEGNLLVPLHEDLSWSTNLTYMLQSKDKDTGNPLSVIPEYTLNSTLDWQASERLSTQLTSTIYGRQEPPKHGTSRNTPVVSRKEVGTYGIWGVSAGYTFSENLSVRGGVSNLFDKRLYRQGNSFDAGAATYNEPGRAYYVSMTTSF.

The signal sequence occupies residues 1–28 (MYPQFRRGHLAAAVLFASSSLLGGQALA). Residues 57–184 (QELKQAPGVS…AGGVVNIITK (128 aa)) enclose the TBDR plug domain. Disordered stretches follow at residues 91–112 (GVNL…IDIR) and 409–435 (SSLK…PKSK). Polar residues predominate over residues 94 to 108 (LTGNSSSGQRGNNRQ). The 554-residue stretch at 189–742 (RLRGSMTVFT…AYYVSMTTSF (554 aa)) folds into the TBDR beta-barrel domain. Cys-516 and Cys-525 are oxidised to a cystine. Residues 725–742 (ATYNEPGRAYYVSMTTSF) carry the TonB C-terminal box motif.

This sequence belongs to the TonB-dependent receptor family.

Its subcellular location is the cell outer membrane. In terms of biological role, specific receptor for the siderophore ferric enterobactin. Probably involved in the transport of siderophores, including host catecholamines such as L-DOPA. This chain is Ferric enterobactin receptor PirA, found in Pseudomonas aeruginosa (strain ATCC 15692 / DSM 22644 / CIP 104116 / JCM 14847 / LMG 12228 / 1C / PRS 101 / PAO1).